Here is a 523-residue protein sequence, read N- to C-terminus: Protein nucleotidyltransferase YdiU (523 aa).

ATP-binding residues include Gly-101, Gly-103, Arg-104, Lys-128, Asp-140, Gly-141, Arg-198, and Arg-205. Asp-275 acts as the Proton acceptor in catalysis. Mg(2+) contacts are provided by Asn-276 and Asp-285. Asp-285 lines the ATP pocket.

Belongs to the SELO family. Mg(2+) serves as cofactor. The cofactor is Mn(2+).

It catalyses the reaction L-seryl-[protein] + ATP = 3-O-(5'-adenylyl)-L-seryl-[protein] + diphosphate. The enzyme catalyses L-threonyl-[protein] + ATP = 3-O-(5'-adenylyl)-L-threonyl-[protein] + diphosphate. It carries out the reaction L-tyrosyl-[protein] + ATP = O-(5'-adenylyl)-L-tyrosyl-[protein] + diphosphate. The catalysed reaction is L-histidyl-[protein] + UTP = N(tele)-(5'-uridylyl)-L-histidyl-[protein] + diphosphate. It catalyses the reaction L-seryl-[protein] + UTP = O-(5'-uridylyl)-L-seryl-[protein] + diphosphate. The enzyme catalyses L-tyrosyl-[protein] + UTP = O-(5'-uridylyl)-L-tyrosyl-[protein] + diphosphate. Its function is as follows. Nucleotidyltransferase involved in the post-translational modification of proteins. It can catalyze the addition of adenosine monophosphate (AMP) or uridine monophosphate (UMP) to a protein, resulting in modifications known as AMPylation and UMPylation. The sequence is that of Protein nucleotidyltransferase YdiU from Aromatoleum aromaticum (strain DSM 19018 / LMG 30748 / EbN1) (Azoarcus sp. (strain EbN1)).